The chain runs to 211 residues: MDVADLRREYTRGGLHRADLPAEPLALFEKWLAQACEAKLTDPTAMVVGTVDADGQPWQRTVLLKHYDAEGMVFYTNMGSRKAHQLEGNPRISLLFPWHTLDRQVHVTGRVEKMSTFEVMKYFHSRPKDSQIAAWVSQQSTRISARGVLEAKFLELKQKFANGEVPLPSFWGGFRVRIDTVEFWQGGEHRLHDRFYYTREGEGWHIERLAP.

Substrate contacts are provided by residues 7–10 and K65; that span reads RREY. Residues 60–65, 75–76, R81, K82, and Q104 each bind FMN; these read RTVLLK and YT. Residues Y122, R126, and S130 each contribute to the substrate site. Residues 139-140 and W184 contribute to the FMN site; that span reads QS. Substrate is bound at residue 190–192; that stretch reads RLH. R194 serves as a coordination point for FMN.

The protein belongs to the pyridoxamine 5'-phosphate oxidase family. As to quaternary structure, homodimer. It depends on FMN as a cofactor.

The catalysed reaction is pyridoxamine 5'-phosphate + O2 + H2O = pyridoxal 5'-phosphate + H2O2 + NH4(+). The enzyme catalyses pyridoxine 5'-phosphate + O2 = pyridoxal 5'-phosphate + H2O2. It participates in cofactor metabolism; pyridoxal 5'-phosphate salvage; pyridoxal 5'-phosphate from pyridoxamine 5'-phosphate: step 1/1. Its pathway is cofactor metabolism; pyridoxal 5'-phosphate salvage; pyridoxal 5'-phosphate from pyridoxine 5'-phosphate: step 1/1. Functionally, catalyzes the oxidation of either pyridoxine 5'-phosphate (PNP) or pyridoxamine 5'-phosphate (PMP) into pyridoxal 5'-phosphate (PLP). The sequence is that of Pyridoxine/pyridoxamine 5'-phosphate oxidase from Aeromonas hydrophila subsp. hydrophila (strain ATCC 7966 / DSM 30187 / BCRC 13018 / CCUG 14551 / JCM 1027 / KCTC 2358 / NCIMB 9240 / NCTC 8049).